We begin with the raw amino-acid sequence, 468 residues long: ATP synthase subunit beta (468 aa).

Residue 148–155 (GGAGVGKT) coordinates ATP.

This sequence belongs to the ATPase alpha/beta chains family. In terms of assembly, F-type ATPases have 2 components, CF(1) - the catalytic core - and CF(0) - the membrane proton channel. CF(1) has five subunits: alpha(3), beta(3), gamma(1), delta(1), epsilon(1). CF(0) has three main subunits: a(1), b(2) and c(9-12). The alpha and beta chains form an alternating ring which encloses part of the gamma chain. CF(1) is attached to CF(0) by a central stalk formed by the gamma and epsilon chains, while a peripheral stalk is formed by the delta and b chains.

The protein resides in the cell inner membrane. It carries out the reaction ATP + H2O + 4 H(+)(in) = ADP + phosphate + 5 H(+)(out). Its function is as follows. Produces ATP from ADP in the presence of a proton gradient across the membrane. The catalytic sites are hosted primarily by the beta subunits. In Xanthomonas euvesicatoria pv. vesicatoria (strain 85-10) (Xanthomonas campestris pv. vesicatoria), this protein is ATP synthase subunit beta.